Consider the following 424-residue polypeptide: Serine--tRNA ligase (424 aa).

Residue 231 to 233 participates in L-serine binding; sequence TAE. 262-264 is a binding site for ATP; it reads RSE. Residue E285 coordinates L-serine. ATP is bound at residue 349 to 352; the sequence is EISS. Residue S385 coordinates L-serine.

It belongs to the class-II aminoacyl-tRNA synthetase family. Type-1 seryl-tRNA synthetase subfamily. As to quaternary structure, homodimer. The tRNA molecule binds across the dimer.

It is found in the cytoplasm. It carries out the reaction tRNA(Ser) + L-serine + ATP = L-seryl-tRNA(Ser) + AMP + diphosphate + H(+). It catalyses the reaction tRNA(Sec) + L-serine + ATP = L-seryl-tRNA(Sec) + AMP + diphosphate + H(+). It participates in aminoacyl-tRNA biosynthesis; selenocysteinyl-tRNA(Sec) biosynthesis; L-seryl-tRNA(Sec) from L-serine and tRNA(Sec): step 1/1. Functionally, catalyzes the attachment of serine to tRNA(Ser). Is also able to aminoacylate tRNA(Sec) with serine, to form the misacylated tRNA L-seryl-tRNA(Sec), which will be further converted into selenocysteinyl-tRNA(Sec). In Bacillus cereus (strain AH187), this protein is Serine--tRNA ligase.